A 166-amino-acid chain; its full sequence is Transcription antitermination protein NusB (166 aa).

The segment covering 1 to 18 (MISDESDRFNPRDPKPAD) has biased composition (basic and acidic residues). A disordered region spans residues 1-28 (MISDESDRFNPRDPKPADAGKPSKSAKR).

This sequence belongs to the NusB family.

Involved in transcription antitermination. Required for transcription of ribosomal RNA (rRNA) genes. Binds specifically to the boxA antiterminator sequence of the ribosomal RNA (rrn) operons. The sequence is that of Transcription antitermination protein NusB from Pseudomonas putida (strain GB-1).